The sequence spans 100 residues: Aspartyl/glutamyl-tRNA(Asn/Gln) amidotransferase subunit C (100 aa).

Belongs to the GatC family. Heterotrimer of A, B and C subunits.

It carries out the reaction L-glutamyl-tRNA(Gln) + L-glutamine + ATP + H2O = L-glutaminyl-tRNA(Gln) + L-glutamate + ADP + phosphate + H(+). The catalysed reaction is L-aspartyl-tRNA(Asn) + L-glutamine + ATP + H2O = L-asparaginyl-tRNA(Asn) + L-glutamate + ADP + phosphate + 2 H(+). Allows the formation of correctly charged Asn-tRNA(Asn) or Gln-tRNA(Gln) through the transamidation of misacylated Asp-tRNA(Asn) or Glu-tRNA(Gln) in organisms which lack either or both of asparaginyl-tRNA or glutaminyl-tRNA synthetases. The reaction takes place in the presence of glutamine and ATP through an activated phospho-Asp-tRNA(Asn) or phospho-Glu-tRNA(Gln). The chain is Aspartyl/glutamyl-tRNA(Asn/Gln) amidotransferase subunit C from Streptococcus pneumoniae (strain JJA).